The primary structure comprises 276 residues: NAD-capped RNA hydrolase NudC (276 aa).

Substrate is bound at residue Arg-82. Zn(2+) is bound by residues Cys-112 and Cys-115. Glu-125 contributes to the substrate binding site. Positions 130 and 133 each coordinate Zn(2+). Tyr-138 contacts substrate. The Nudix hydrolase domain occupies 139-262 (PRISPSMIVL…SIARYLIDLY (124 aa)). Positions 172, 188, and 192 each coordinate a divalent metal cation. Residues 173-194 (GFAEPGESAEDCLVREVREEVA) carry the Nudix box motif. 206 to 213 (QCWPFPHS) is a substrate binding site. Glu-233 is a binding site for a divalent metal cation. Position 255 (Ala-255) interacts with substrate.

It belongs to the Nudix hydrolase family. NudC subfamily. Homodimer. The cofactor is Mg(2+). Mn(2+) is required as a cofactor. Requires Zn(2+) as cofactor.

The catalysed reaction is a 5'-end NAD(+)-phospho-ribonucleoside in mRNA + H2O = a 5'-end phospho-adenosine-phospho-ribonucleoside in mRNA + beta-nicotinamide D-ribonucleotide + 2 H(+). It carries out the reaction NAD(+) + H2O = beta-nicotinamide D-ribonucleotide + AMP + 2 H(+). It catalyses the reaction NADH + H2O = reduced beta-nicotinamide D-ribonucleotide + AMP + 2 H(+). MRNA decapping enzyme that specifically removes the nicotinamide adenine dinucleotide (NAD) cap from a subset of mRNAs by hydrolyzing the diphosphate linkage to produce nicotinamide mononucleotide (NMN) and 5' monophosphate mRNA. The NAD-cap is present at the 5'-end of some mRNAs and stabilizes RNA against 5'-processing. Has preference for mRNAs with a 5'-end purine. Catalyzes the hydrolysis of a broad range of dinucleotide pyrophosphates. The chain is NAD-capped RNA hydrolase NudC from Pseudomonas putida (strain GB-1).